The sequence spans 61 residues: LPVAFLKFAIVLILFIAMSAMIEAQCIGNGGRCNENVGPPYCCSGFCLRQPGQGYGYCKNR.

The N-terminal stretch at 1–24 (LPVAFLKFAIVLILFIAMSAMIEA) is a signal peptide. Gln25 is subject to Pyrrolidone carboxylic acid. 3 disulfide bridges follow: Cys26/Cys43, Cys33/Cys47, and Cys42/Cys58.

It belongs to the AMP family. In terms of assembly, homodimer. Three disulfide bonds are present. Found only in seeds.

It is found in the secreted. In terms of biological role, possesses antifungal activity and is also active on two tested Gram-positive bacteria but is non-toxic for Gram-negative bacteria and cultured human cells. The sequence is that of Antimicrobial peptide 1 (AMP1) from Mirabilis jalapa (Garden four-o'clock).